We begin with the raw amino-acid sequence, 161 residues long: Cytochrome b6-f complex subunit 4 (161 aa).

A run of 3 helical transmembrane segments spans residues 37–57, 96–116, and 132–152; these read LLYI…GLAV, LLGV…PFIE, and TVFL…TFPI.

Belongs to the cytochrome b family. PetD subfamily. In terms of assembly, the 4 large subunits of the cytochrome b6-f complex are cytochrome b6, subunit IV (17 kDa polypeptide, PetD), cytochrome f and the Rieske protein, while the 4 small subunits are PetG, PetL, PetM and PetN. The complex functions as a dimer.

Its subcellular location is the cellular thylakoid membrane. Functionally, component of the cytochrome b6-f complex, which mediates electron transfer between photosystem II (PSII) and photosystem I (PSI), cyclic electron flow around PSI, and state transitions. This Cyanothece sp. (strain PCC 7425 / ATCC 29141) protein is Cytochrome b6-f complex subunit 4.